Here is a 133-residue protein sequence, read N- to C-terminus: MISITEWQKIGVGITGFGVFFILFGILLYFDSVLLAFGNLLFLTGLSLIIGLRRTFAFFFQRHKLKGTSFFLGGVAIVLLRWPLLGMLLEAYGFISLFKGFFPVVFGFLGSAFNIPFLSTLFQKLQGSSSSMV.

Topologically, residues M1–K9 are cytoplasmic. The helical transmembrane segment at I10 to F30 threads the bilayer. A topological domain (lumenal) is located at residue D31. A helical transmembrane segment spans residues S32–L52. The Cytoplasmic segment spans residues R53–T68. A helical membrane pass occupies residues S69–L89. The Lumenal portion of the chain corresponds to E90–Y92. A helical membrane pass occupies residues G93–F113. Residues N114–V133 lie on the Cytoplasmic side of the membrane.

This sequence belongs to the GOT1 family.

The protein localises to the golgi apparatus membrane. Functionally, may be involved in fusion of ER-derived transport vesicles with the Golgi complex. The protein is Vesicle transport protein GOT1A of Mus musculus (Mouse).